Consider the following 892-residue polypeptide: Zinc finger protein 473 homolog (892 aa).

One can recognise a KRAB domain in the interval 23–101 (ETLKDLAMDF…TKSSPLQSGF (79 aa)). 2 stretches are compositionally biased toward polar residues: residues 66–76 (DTSQPSLTSQP) and 84–97 (ATST…SSPL). 2 disordered regions span residues 66 to 97 (DTSQ…SSPL) and 134 to 203 (GDPE…DSVQ). Composition is skewed to basic and acidic residues over residues 138 to 156 (SLPR…HQSP) and 190 to 203 (KESR…DSVQ). 2 C2H2-type zinc fingers span residues 209 to 231 (YKCS…WVLH) and 265 to 287 (YTCQ…QKIH). Residues 297–308 (SDSNLEGLSRSP) show a composition bias toward polar residues. A disordered region spans residues 297–370 (SDSNLEGLSR…HPKPLRHQKT (74 aa)). Composition is skewed to basic and acidic residues over residues 313–323 (GKQRLSKDTDS) and 332–353 (QDQE…ESQP). 8 C2H2-type zinc fingers span residues 377–399 (FRCK…QRAH), 404–426 (YKCA…RKSH), 432–454 (CECQ…QAIH), 460–482 (YKCD…QRIH), 488–510 (HKCS…QRVH), 516–538 (HQCP…RLRH), 544–566 (FGCA…NKIH), and 572–594 (YECK…LSIH). Lys-476 participates in a covalent cross-link: Glycyl lysine isopeptide (Lys-Gly) (interchain with G-Cter in SUMO2). A Glycyl lysine isopeptide (Lys-Gly) (interchain with G-Cter in SUMO2) cross-link involves residue Lys-602. The C2H2-type 11; degenerate zinc finger occupies 697-719 (FKCDIYNRAFKQRAHLSKHQLIH). 6 consecutive C2H2-type zinc fingers follow at residues 725 to 747 (FKCN…QKTH), 753 to 775 (FECS…QKIH), 781 to 803 (FKCG…QRIH), 809 to 831 (YVCQ…LRIH), 837 to 859 (YTCG…ERIH), and 865 to 887 (YACG…QRIH).

This sequence belongs to the krueppel C2H2-type zinc-finger protein family. Interacts with the SLBP/pre-mRNA complex but not with SLBP alone. Interacts with LSM11 in a U7 snRNP-dependent manner.

It localises to the nucleus. Functionally, involved in histone 3'-end pre-mRNA processing by associating with U7 snRNP and interacting with SLBP/pre-mRNA complex. Increases histone 3'-end pre-mRNA processing but has no effect on U7 snRNP levels, when overexpressed. Required for cell cycle progression from G1 to S phases. This Mus musculus (Mouse) protein is Zinc finger protein 473 homolog (Znf473).